A 107-amino-acid polypeptide reads, in one-letter code: UPF0145 protein ECA2666 (107 aa).

The protein belongs to the UPF0145 family.

The protein is UPF0145 protein ECA2666 of Pectobacterium atrosepticum (strain SCRI 1043 / ATCC BAA-672) (Erwinia carotovora subsp. atroseptica).